Here is a 468-residue protein sequence, read N- to C-terminus: Proline--tRNA ligase (468 aa).

This sequence belongs to the class-II aminoacyl-tRNA synthetase family. ProS type 3 subfamily. Homodimer.

The protein resides in the cytoplasm. It catalyses the reaction tRNA(Pro) + L-proline + ATP = L-prolyl-tRNA(Pro) + AMP + diphosphate. Catalyzes the attachment of proline to tRNA(Pro) in a two-step reaction: proline is first activated by ATP to form Pro-AMP and then transferred to the acceptor end of tRNA(Pro). The chain is Proline--tRNA ligase from Frankia alni (strain DSM 45986 / CECT 9034 / ACN14a).